Here is a 504-residue protein sequence, read N- to C-terminus: Histidine ammonia-lyase (504 aa).

The segment at residues 142-144 (ASG) is a cross-link (5-imidazolinone (Ala-Gly)). Ser-143 is subject to 2,3-didehydroalanine (Ser).

It belongs to the PAL/histidase family. Contains an active site 4-methylidene-imidazol-5-one (MIO), which is formed autocatalytically by cyclization and dehydration of residues Ala-Ser-Gly.

It is found in the cytoplasm. The enzyme catalyses L-histidine = trans-urocanate + NH4(+). It participates in amino-acid degradation; L-histidine degradation into L-glutamate; N-formimidoyl-L-glutamate from L-histidine: step 1/3. The polypeptide is Histidine ammonia-lyase (Staphylococcus aureus (strain MSSA476)).